Consider the following 317-residue polypeptide: Ornithine carbamoyltransferase (317 aa).

Residues serine 54–threonine 57, glutamine 81, arginine 105, and histidine 132–glutamine 135 contribute to the carbamoyl phosphate site. L-ornithine-binding positions include asparagine 163, aspartate 227, and serine 231–methionine 232. Carbamoyl phosphate is bound by residues cysteine 267 to leucine 268 and arginine 295.

It belongs to the aspartate/ornithine carbamoyltransferase superfamily. OTCase family.

It localises to the cytoplasm. It catalyses the reaction carbamoyl phosphate + L-ornithine = L-citrulline + phosphate + H(+). It participates in amino-acid biosynthesis; L-arginine biosynthesis; L-arginine from L-ornithine and carbamoyl phosphate: step 1/3. In terms of biological role, reversibly catalyzes the transfer of the carbamoyl group from carbamoyl phosphate (CP) to the N(epsilon) atom of ornithine (ORN) to produce L-citrulline. In Parafrankia sp. (strain EAN1pec), this protein is Ornithine carbamoyltransferase.